We begin with the raw amino-acid sequence, 676 residues long: Mediator of RNA polymerase II transcription subunit 17 (676 aa).

2 disordered regions span residues 27-68 (IGSK…QFSN) and 117-176 (IEND…TQDT). Residues 29-40 (SKSTSPHSNSTS) are compositionally biased toward low complexity. Composition is skewed to basic and acidic residues over residues 47-56 (HNTENEEVDN) and 120-134 (DNGKQESKDDTKAED). The span at 135 to 145 (GIDTMDIDQND) shows a compositional bias: acidic residues. Residues 146–160 (NSEANTNDIGYNEWS) are compositionally biased toward polar residues.

Belongs to the Mediator complex subunit 17 family. As to quaternary structure, component of the Mediator complex.

It localises to the nucleus. Component of the Mediator complex, a coactivator involved in the regulated transcription of nearly all RNA polymerase II-dependent genes. Mediator functions as a bridge to convey information from gene-specific regulatory proteins to the basal RNA polymerase II transcription machinery. Mediator is recruited to promoters by direct interactions with regulatory proteins and serves as a scaffold for the assembly of a functional preinitiation complex with RNA polymerase II and the general transcription factors. The chain is Mediator of RNA polymerase II transcription subunit 17 (SRB4) from Candida glabrata (strain ATCC 2001 / BCRC 20586 / JCM 3761 / NBRC 0622 / NRRL Y-65 / CBS 138) (Yeast).